The chain runs to 473 residues: 3-isopropylmalate dehydratase large subunit (473 aa).

[4Fe-4S] cluster contacts are provided by cysteine 354, cysteine 414, and cysteine 417.

Belongs to the aconitase/IPM isomerase family. LeuC type 1 subfamily. In terms of assembly, heterodimer of LeuC and LeuD. The cofactor is [4Fe-4S] cluster.

It carries out the reaction (2R,3S)-3-isopropylmalate = (2S)-2-isopropylmalate. It participates in amino-acid biosynthesis; L-leucine biosynthesis; L-leucine from 3-methyl-2-oxobutanoate: step 2/4. In terms of biological role, catalyzes the isomerization between 2-isopropylmalate and 3-isopropylmalate, via the formation of 2-isopropylmaleate. This Rhodopseudomonas palustris (strain BisB18) protein is 3-isopropylmalate dehydratase large subunit.